Here is a 523-residue protein sequence, read N- to C-terminus: Lysine--tRNA ligase (523 aa).

The 'HIGH' region motif lies at 30-38; it reads PSGYVHVGN. Residues D95, C99, H100, H106, C177, H180, C199, and H203 each coordinate Zn(2+). A 'KMSKS' region motif is present at residues 279-283; that stretch reads KMSGS.

This sequence belongs to the class-I aminoacyl-tRNA synthetase family. Requires Zn(2+) as cofactor.

The protein localises to the cytoplasm. It carries out the reaction tRNA(Lys) + L-lysine + ATP = L-lysyl-tRNA(Lys) + AMP + diphosphate. This Pyrococcus horikoshii (strain ATCC 700860 / DSM 12428 / JCM 9974 / NBRC 100139 / OT-3) protein is Lysine--tRNA ligase (lysS).